The primary structure comprises 291 residues: 3-hydroxy-5-phosphonooxypentane-2,4-dione thiolase (291 aa).

Residue K203 is the Schiff-base intermediate with substrate of the active site.

The protein belongs to the DeoC/FbaB aldolase family. As to quaternary structure, homodecamer.

The protein resides in the cytoplasm. The enzyme catalyses dihydroxyacetone phosphate + acetyl-CoA = 3-hydroxy-2,4-dioxopentyl phosphate + CoA. In terms of biological role, involved in the degradation of phospho-AI-2, thereby terminating induction of the lsr operon and closing the AI-2 signaling cycle. Catalyzes the transfer of an acetyl moiety from 3-hydroxy-5-phosphonooxypentane-2,4-dione to CoA to form glycerone phosphate and acetyl-CoA. This Escherichia coli (strain K12 / DH10B) protein is 3-hydroxy-5-phosphonooxypentane-2,4-dione thiolase.